The primary structure comprises 393 residues: Major outer membrane porin, serovar D (393 aa).

The N-terminal stretch at 1 to 22 (MKKLLKSVLVFAALSSASSLQA) is a signal peptide.

It belongs to the chlamydial porin (CP) (TC 1.B.2) family. As to quaternary structure, part of a disulfide cross-linked outer membrane complex (COMC) composed of the major outer membrane porin (MOMP), the small cysteine-rich protein (OmcA) and the large cysteine-rich periplasmic protein (OmcB).

Its subcellular location is the cell outer membrane. Functionally, in elementary bodies (EBs, the infectious stage, which is able to survive outside the host cell) provides the structural integrity of the outer envelope through disulfide cross-links with the small cysteine-rich protein and the large cysteine-rich periplasmic protein. It has been described in publications as the Sarkosyl-insoluble COMC (Chlamydia outer membrane complex), and serves as the functional equivalent of peptidoglycan. Its function is as follows. Permits diffusion of specific solutes through the outer membrane. The polypeptide is Major outer membrane porin, serovar D (ompA) (Chlamydia trachomatis serovar D (strain ATCC VR-885 / DSM 19411 / UW-3/Cx)).